Here is a 147-residue protein sequence, read N- to C-terminus: Urease accessory protein UreE (147 aa).

This sequence belongs to the UreE family.

The protein localises to the cytoplasm. Its function is as follows. Involved in urease metallocenter assembly. Binds nickel. Probably functions as a nickel donor during metallocenter assembly. The protein is Urease accessory protein UreE of Marinomonas sp. (strain MWYL1).